Reading from the N-terminus, the 271-residue chain is Tryptophan synthase alpha chain (271 aa).

Active-site proton acceptor residues include E49 and D60.

Belongs to the TrpA family. Tetramer of two alpha and two beta chains.

It catalyses the reaction (1S,2R)-1-C-(indol-3-yl)glycerol 3-phosphate + L-serine = D-glyceraldehyde 3-phosphate + L-tryptophan + H2O. Its pathway is amino-acid biosynthesis; L-tryptophan biosynthesis; L-tryptophan from chorismate: step 5/5. Its function is as follows. The alpha subunit is responsible for the aldol cleavage of indoleglycerol phosphate to indole and glyceraldehyde 3-phosphate. The sequence is that of Tryptophan synthase alpha chain from Burkholderia pseudomallei (strain 1106a).